We begin with the raw amino-acid sequence, 187 residues long: Orotate phosphoribosyltransferase (187 aa).

Residues R98, K99, K102, H104, and 128–136 contribute to the 5-phospho-alpha-D-ribose 1-diphosphate site; that span reads EDVTTTGGS. Residues T132 and R160 each contribute to the orotate site.

It belongs to the purine/pyrimidine phosphoribosyltransferase family. PyrE subfamily. Homodimer. Requires Mg(2+) as cofactor.

It catalyses the reaction orotidine 5'-phosphate + diphosphate = orotate + 5-phospho-alpha-D-ribose 1-diphosphate. It participates in pyrimidine metabolism; UMP biosynthesis via de novo pathway; UMP from orotate: step 1/2. In terms of biological role, catalyzes the transfer of a ribosyl phosphate group from 5-phosphoribose 1-diphosphate to orotate, leading to the formation of orotidine monophosphate (OMP). This is Orotate phosphoribosyltransferase from Rhodopseudomonas palustris (strain BisB18).